The primary structure comprises 202 residues: Recombination protein RecR (202 aa).

The segment at 56-71 (CVVCGTVSDKEHCRIC) adopts a C4-type zinc-finger fold. The Toprim domain occupies 79-179 (TVICVVEEPK…TVSRLASGLP (101 aa)).

The protein belongs to the RecR family.

Functionally, may play a role in DNA repair. It seems to be involved in an RecBC-independent recombinational process of DNA repair. It may act with RecF and RecO. The protein is Recombination protein RecR of Rhodococcus jostii (strain RHA1).